The chain runs to 139 residues: GSK3B-interacting protein (139 aa).

A required for PRKAR2A interaction; contributes to a protective effect against H(2)O(2)-induced apoptosis region spans residues 41-45; sequence VNDVL. The tract at residues 115-139 is interaction with GSK3B and acts as a GSK3B inhibitor; that stretch reads SPAYREAFGNALLQRLEALKREGQS.

The protein belongs to the GSKIP family. In terms of assembly, forms a complex composed of PRKAR2A or PRKAR2B, GSK3B and GSKIP through GSKIP interaction; facilitates PKA-induced phosphorylation of GSK3B leading to GSK3B inactivation; recruits DNM1L through GSK3B for PKA-mediated phosphorylation of DNM1L; promotes beta-catenin degradation through GSK3B-induced phosphorylation of beta-catenin; stabilizes beta-catenin and enhances Wnt-induced signaling through PKA-induced phosphorylation of beta-catenin. Interacts with GSK3B; induces GSK3B-mediated phosphorylation of GSKIP and inhibits GSK3B kinase activity. Phosphorylated by GSK3B.

It localises to the cytoplasm. The protein localises to the nucleus. In terms of biological role, A-kinase anchoring protein for GSK3B and PKA that regulates or facilitates their kinase activity towards their targets. The ternary complex enhances Wnt-induced signaling by facilitating the GSK3B- and PKA-induced phosphorylation of beta-catenin leading to beta-catenin degradation and stabilization respectively. Upon cAMP activation, the ternary complex contributes to neuroprotection against oxidative stress-induced apoptosis by facilitating the PKA-induced phosphorylation of DML1 and PKA-induced inactivation of GSK3B. During neurite outgrowth promotes neuron proliferation; while increases beta-catenin-induced transcriptional activity through GSK3B kinase activity inhibition, reduces N-cadherin level to promote cell cycle progression. May play a role in cleft palate formation and is required for postnatal life through modulation of the activity of GSK3B during development. The sequence is that of GSK3B-interacting protein from Bos taurus (Bovine).